A 167-amino-acid chain; its full sequence is Signal peptidase complex catalytic subunit SEC11 (167 aa).

Topologically, residues 1–12 are cytoplasmic; it reads MNIRHQLVQFLN. The helical; Signal-anchor for type II membrane protein transmembrane segment at 13–30 threads the bilayer; that stretch reads LALVLSSAFMAWKTLSVI. Residues 31-167 lie on the Lumenal side of the membrane; it reads TNSHSPIVVV…MGISSLLSNE (137 aa). Active-site charge relay system residues include S44, H83, and D109. Residues 153–164 are C-terminal short (CTS) helix; it reads TLLGLMGISSLL.

It belongs to the peptidase S26B family. In terms of assembly, component of the signal peptidase complex (SPC) composed of a catalytic subunit SEC11 and three accessory subunits SPC1, SPC2 and SPC3. The complex induces a local thinning of the ER membrane which is used to measure the length of the signal peptide (SP) h-region of protein substrates. This ensures the selectivity of the complex towards h-regions shorter than 18-20 amino acids. SPC associates with the translocon complex.

The protein resides in the endoplasmic reticulum membrane. The enzyme catalyses Cleavage of hydrophobic, N-terminal signal or leader sequences from secreted and periplasmic proteins.. In terms of biological role, catalytic component of the signal peptidase complex (SPC) which catalyzes the cleavage of N-terminal signal sequences from nascent proteins as they are translocated into the lumen of the endoplasmic reticulum. Specifically cleaves N-terminal signal peptides that contain a hydrophobic alpha-helix (h-region) shorter than 18-20 amino acids. The polypeptide is Signal peptidase complex catalytic subunit SEC11 (SEC11) (Debaryomyces hansenii (strain ATCC 36239 / CBS 767 / BCRC 21394 / JCM 1990 / NBRC 0083 / IGC 2968) (Yeast)).